We begin with the raw amino-acid sequence, 1174 residues long: Male determiner protein Mdmd(V) (1174 aa).

Over residues 1–15 the composition is skewed to basic and acidic residues; sequence MNATDAESRKPENKP. 3 disordered regions span residues 1–51, 79–110, and 136–259; these read MNAT…SGQR, RKDGSNEMLPKEDSINTNHNYTTDSNEHPVEL, and KQLS…LRRS. Over residues 16-35 the composition is skewed to low complexity; sequence SSESSSSGSTSGSSDGEVSS. Residues 36 to 47 are compositionally biased toward polar residues; the sequence is KTYFKNNKSKVL. Over residues 79–92 the composition is skewed to basic and acidic residues; that stretch reads RKDGSNEMLPKEDS. Residues 93 to 102 are compositionally biased toward polar residues; the sequence is INTNHNYTTD. The span at 138–153 shows a compositional bias: low complexity; it reads LSAYRSRSRSTRLSYS. The segment covering 167-180 has biased composition (basic residues); the sequence is SRYKKSVLRSRRTS. The span at 183-200 shows a compositional bias: basic and acidic residues; that stretch reads HGRDSSTTKRSVSRDKDN. Over residues 201-223 the composition is skewed to basic residues; that stretch reads RLRRRIGSSRSHTRSHSRFRRSE. Positions 235 to 259 are enriched in basic and acidic residues; that stretch reads RSQERRHERRRSMSSDYERIALRRS. Residues 348-531 enclose the MIF4G domain; sequence KKYIHGYINK…KVLFQVRRDG (184 aa). Low complexity predominate over residues 597–608; it reads DSDGSFGSGSNS. Positions 597-616 are disordered; that stretch reads DSDGSFGSGSNSETALSDCD. One can recognise an MI domain in the interval 641 to 757; the sequence is ALRRTIYLTL…SWDVLDCIKL (117 aa). Over residues 840-857 the composition is skewed to low complexity; the sequence is SAPSSSSSSSLSSELSAP. Disordered stretches follow at residues 840–1045 and 1095–1133; these read SAPS…SRTK and RKDNYGNRQNHEISQRHDSEIKRRREERKKRHHEKNHSR. Residues 869–909 show a composition bias toward basic residues; it reads KKKHKGKNKKMTKKKNPSKKKEKTKKIVGKNKIAAKNKTIK. Residues 910 to 924 show a composition bias toward basic and acidic residues; the sequence is RRTDKDNSSSKDNFL. Residues 926-957 show a composition bias toward low complexity; the sequence is SESSSNESISLDSLSSELFAPSSYSSSESSND. Residues 963–1001 show a composition bias toward basic residues; sequence KHKGKNKKMTKKKNPSNKREKTKKKLSKNKKAPNKNTKK. A compositionally biased stretch (low complexity) spans 1010–1020; it reads SSESSISESKS. Basic residues predominate over residues 1034-1045; it reads RKKRVTSKSRTK. Over residues 1095–1118 the composition is skewed to basic and acidic residues; it reads RKDNYGNRQNHEISQRHDSEIKRR. The segment covering 1119-1130 has biased composition (basic residues); the sequence is REERKKRHHEKN.

Belongs to the CWC22 family. As to quaternary structure, component of the spliceosome C complex.

Its subcellular location is the nucleus speckle. Its function is as follows. Male determiner protein (M-factor) that controls male somatic sexual differentiation. Acts as a dominant factor that regulates the mRNA splicing of transformer (tra) and doublesex (dsx) transcripts and promotes expression of male splice forms of tra and dsx. Probably acts as a component of the spliceosome C complex required for mRNA splicing factor and exon-junction complex (EJC) assembly. Hinders eIF4AIII from non-specifically binding RNA and escorts it to the splicing machinery to promote EJC assembly on mature mRNAs. The polypeptide is Male determiner protein Mdmd(V) (Musca domestica (House fly)).